The chain runs to 447 residues: MRYLPLTPEDRTEMLARVGVPSVDALFEDIPAAKRLVELPDLPLHKGELEVERWLGRLSAKNLAASAAPFFVGAGAYKHHVPASVDHLIQRSEFMTSYTPYQPEIAQGTLQYVFEFQTQVAALTGMEVANASMYDGSTATGEAVLMAHRLTKRGKAILSGGLHPHYAQVVTSQAALTGHDVVVMPPDLQAKEDLVGRLDAQTSCLVVQSPDVFGNLRDLEPLAEACRKQGVLLIAVFTEAVSLGLVKAPGDMGADIVVGEGQSIGNALNFGGPYVGLFATRSKYLRQMPGRLCGETLDADGRRGFVLTLSTREQHIRRDKATSNICTNSGLCCLAFTIHLTLLGEQGLRQLATINHAHAVDLADRLAKVPGVELLNETFFNEFTIRLPGRAEDHVEALAAQGILAGVPVSRLLPGQGCDDLLIIASTEVNSDDDRAALVDALAKQIA.

Belongs to the GcvP family. N-terminal subunit subfamily. As to quaternary structure, the glycine cleavage system is composed of four proteins: P, T, L and H. In this organism, the P 'protein' is a heterodimer of two subunits.

The catalysed reaction is N(6)-[(R)-lipoyl]-L-lysyl-[glycine-cleavage complex H protein] + glycine + H(+) = N(6)-[(R)-S(8)-aminomethyldihydrolipoyl]-L-lysyl-[glycine-cleavage complex H protein] + CO2. In terms of biological role, the glycine cleavage system catalyzes the degradation of glycine. The P protein binds the alpha-amino group of glycine through its pyridoxal phosphate cofactor; CO(2) is released and the remaining methylamine moiety is then transferred to the lipoamide cofactor of the H protein. The chain is Probable glycine dehydrogenase (decarboxylating) subunit 1 from Beijerinckia indica subsp. indica (strain ATCC 9039 / DSM 1715 / NCIMB 8712).